Here is a 548-residue protein sequence, read N- to C-terminus: Splicing factor U2af large subunit B (548 aa).

A compositionally biased stretch (basic and acidic residues) spans 1 to 82 (MADDHAAAAD…DRDRDRDKDR (82 aa)). Residues 1-156 (MADDHAAAAD…SKRVSGFDMA (156 aa)) are disordered. Basic residues predominate over residues 83–93 (DRHHRHHRERR). Positions 94–120 (EHRDRSDDHDRHRSRDSERRRDHERDG) are enriched in basic and acidic residues. The span at 121-149 (RRRHRSRSRSRSRGRDRRSRSRSRSKSKR) shows a compositional bias: basic residues. 3 consecutive RRM domains span residues 214–297 (RRVY…RPTD), 334–412 (DRIF…RANQ), and 453–539 (QVVS…YPEN).

It belongs to the splicing factor SR family.

It is found in the nucleus. Its function is as follows. Necessary for the splicing of pre-mRNA. The sequence is that of Splicing factor U2af large subunit B (U2AF65B) from Oryza sativa subsp. japonica (Rice).